The primary structure comprises 484 residues: Glutamate--tRNA ligase (484 aa).

Residues 11–21 (PSPTGYLHIGN) carry the 'HIGH' region motif. A 'KMSKS' region motif is present at residues 252–256 (KLSKR). Lysine 255 contributes to the ATP binding site.

Belongs to the class-I aminoacyl-tRNA synthetase family. Glutamate--tRNA ligase type 1 subfamily. As to quaternary structure, monomer.

The protein resides in the cytoplasm. The enzyme catalyses tRNA(Glu) + L-glutamate + ATP = L-glutamyl-tRNA(Glu) + AMP + diphosphate. Its function is as follows. Catalyzes the attachment of glutamate to tRNA(Glu) in a two-step reaction: glutamate is first activated by ATP to form Glu-AMP and then transferred to the acceptor end of tRNA(Glu). The sequence is that of Glutamate--tRNA ligase from Staphylococcus aureus (strain bovine RF122 / ET3-1).